A 90-amino-acid chain; its full sequence is Acylphosphatase (90 aa).

The Acylphosphatase-like domain occupies 3-90 (QYHMIADGRV…KGYRTFSISY (88 aa)). Active-site residues include Arg18 and Asn36.

Belongs to the acylphosphatase family.

The catalysed reaction is an acyl phosphate + H2O = a carboxylate + phosphate + H(+). The protein is Acylphosphatase (acyP) of Bacillus velezensis (strain DSM 23117 / BGSC 10A6 / LMG 26770 / FZB42) (Bacillus amyloliquefaciens subsp. plantarum).